We begin with the raw amino-acid sequence, 404 residues long: UBP1-associated protein 2C (404 aa).

The interval 1–29 (MDMMKKRKLDENGNGLNTNGGGTIGPTRL) is disordered. RRM domains follow at residues 75–152 (RKLF…LAAS) and 167–248 (RKIY…GKKG). Disordered stretches follow at residues 246–270 (KKGG…HGEG) and 344–404 (GSGQ…PPNY).

Expressed in root apical and lateral meristems, young leaves and embryos.

The protein localises to the nucleus. Its function is as follows. Heterogeneous nuclear ribonucleoprotein (hnRNP)-like protein that acts as a component of a complex regulating the turnover of mRNAs in the nucleus. Binds with high affinity to RNA molecules that contain U-rich sequences in 3'-UTRs. May function in complex with UBP1 and contribute to the stabilization of mRNAs in the nucleus. The polypeptide is UBP1-associated protein 2C (UBA2C) (Arabidopsis thaliana (Mouse-ear cress)).